We begin with the raw amino-acid sequence, 259 residues long: Apolipoprotein A-I (259 aa).

The N-terminal stretch at 1-18 (MKAAVLAVALVFLTGCQA) is a signal peptide. 2 repeat units span residues 67-88 (LNLLDNWDTLGSTVGRLQEQLG) and 89-110 (PVTQEFWANLEKETDWLRNEMN). Residues 67-259 (LNLLDNWDTL…IDEAKKKLNA (193 aa)) form a 10 X approximate tandem repeats region. Met109 carries the methionine sulfoxide modification. The 3; half-length repeat unit spans residues 111 to 121 (KDLENVKQKMQ). Repeat unit 4 spans residues 122 to 143 (PHLDEFQEKWNEEVEAYRQKLE). Residues 144–161 (PLGTELHKNAKEMQRHLK) form a 5; truncated repeat. The stretch at 162–183 (VVAEEFRDRMRVNADALRAKFG) is repeat 6. Residues 184 to 203 (LYSDQMRENLAQRLTEIKNH) form a 7; truncated repeat. The residue at position 189 (Met189) is a Methionine sulfoxide. Repeat unit 8 spans residues 204–225 (PTLIEYHTKASDHLKTLGEKAK). A 9; half-length repeat occupies 226–236 (PALDDLGQGLM). Met236 bears the Methionine sulfoxide mark. Residues 237–259 (PVLEAWKAKIMSMIDEAKKKLNA) form repeat 10.

This sequence belongs to the apolipoprotein A1/A4/E family. As to quaternary structure, homodimer. Interacts with APOA1BP and CLU. Component of a sperm activating protein complex (SPAP), consisting of APOA1, an immunoglobulin heavy chain, an immunoglobulin light chain and albumin. Interacts with NDRG1. Interacts with SCGB3A2. Interacts with NAXE and YJEFN3. Post-translationally, glycosylated. In terms of processing, palmitoylated. Phosphorylation sites are present in the extracellular medium. In terms of tissue distribution, major protein of plasma HDL, also found in chylomicrons.

It is found in the secreted. Participates in the reverse transport of cholesterol from tissues to the liver for excretion by promoting cholesterol efflux from tissues and by acting as a cofactor for the lecithin cholesterol acyltransferase (LCAT). As part of the SPAP complex, activates spermatozoa motility. The protein is Apolipoprotein A-I (Apoa1) of Rattus norvegicus (Rat).